We begin with the raw amino-acid sequence, 160 residues long: 6,7-dimethyl-8-ribityllumazine synthase (160 aa).

5-amino-6-(D-ribitylamino)uracil is bound by residues Trp27, Ala59–Glu61, and Val81–Ile83. Gln86–Thr87 serves as a coordination point for (2S)-2-hydroxy-3-oxobutyl phosphate. The active-site Proton donor is the His89. A 5-amino-6-(D-ribitylamino)uracil-binding site is contributed by Asn114. A (2S)-2-hydroxy-3-oxobutyl phosphate-binding site is contributed by Arg128.

The protein belongs to the DMRL synthase family. Homopentamer.

The catalysed reaction is (2S)-2-hydroxy-3-oxobutyl phosphate + 5-amino-6-(D-ribitylamino)uracil = 6,7-dimethyl-8-(1-D-ribityl)lumazine + phosphate + 2 H2O + H(+). It functions in the pathway cofactor biosynthesis; riboflavin biosynthesis; riboflavin from 2-hydroxy-3-oxobutyl phosphate and 5-amino-6-(D-ribitylamino)uracil: step 1/2. Functionally, catalyzes the formation of 6,7-dimethyl-8-ribityllumazine by condensation of 5-amino-6-(D-ribitylamino)uracil with 3,4-dihydroxy-2-butanone 4-phosphate. This is the penultimate step in the biosynthesis of riboflavin. In Mycobacterium sp. (strain JLS), this protein is 6,7-dimethyl-8-ribityllumazine synthase.